Here is an 819-residue protein sequence, read N- to C-terminus: Leucine--tRNA ligase (819 aa).

The short motif at Pro41–His51 is the 'HIGH' region element. The 'KMSKS' region signature appears at Lys578 to Ser582. Lys581 provides a ligand contact to ATP.

It belongs to the class-I aminoacyl-tRNA synthetase family.

The protein localises to the cytoplasm. It carries out the reaction tRNA(Leu) + L-leucine + ATP = L-leucyl-tRNA(Leu) + AMP + diphosphate. The polypeptide is Leucine--tRNA ligase (Fervidobacterium nodosum (strain ATCC 35602 / DSM 5306 / Rt17-B1)).